Consider the following 880-residue polypeptide: MEKLGLNELRERFLKFFESKGHLRLPSFSLIPQNDPSLLLINSGMAPLKPYFTGQEEPPRRRVTTCQKCIRTPDIENVGKTARHGTFFEMLGNFSFGDYFKNEAIPWAWEFFTEDLKIPVERLWVSIYEDDDEAFEIWNKKVGLPPERIVRMGKDNNFWEHGTGPCGPCSEIYFDRGEDKGCGKPDCKVGCDCDRFIEVWNLVFTQFNKEEDGSYSRLKNPNIDTGMGLERLACVMQDVNNLFEVDTIRRVLDYICKITGVEYGSSEKTDVSIRVITDHIRSTTMMISDGVIPSNEGRGYVLRRLLRRAARHGKLLGMDRPFLSDVASVVIKESKGAYPELAERAENIKKVIRIEEEKFEETIDQGLVILSKYIEETRKKGEKVISGDVVFELHGTYGFPVDLTREIAEENGLGVDEEGFREKMKEHQNLAREDYQSKQGSAWGDDIYSKLDKSVKTEFLGYTESEATARVLYIIKEDQVVDEAQKGDSVTVILDRTPFYAESGGQVGDKGLIEAEGARVKVLDCKKTNDGKYLHIGEIEEGTLRNGMEVKATIDKKRRMAIARNHTTTHLLHKALRNVLGSHVNQAGSLVEPDRLRFDFTHFSAMTPEEIKSVEDQVNEKILESIAVDIREMSIDEARKMGATALFGEKYGDVVRVVKIGDYSIELCGGTHLNVTSQAGFIKIVSESGVASGVRRIEALTGEAALKHFDEEEKLLRDIAQVLKTNPSDSVKRIESLLNEIKAAQKEIEQLRSKLVSSSLDDVLAKAVEINGVKVVTARFDQFDMEALRNTGDTIRNKLGSGVVVLGTGFGGKVSLVVMATKDVVAKGIHAGNIIKEAAKVAGGGGGGRPDMAQAGGKDVSKIDEALKQAVKVIESQLAG.

Zn(2+) is bound by residues His566, His570, Cys668, and His672.

It belongs to the class-II aminoacyl-tRNA synthetase family. The cofactor is Zn(2+).

The protein localises to the cytoplasm. It catalyses the reaction tRNA(Ala) + L-alanine + ATP = L-alanyl-tRNA(Ala) + AMP + diphosphate. Catalyzes the attachment of alanine to tRNA(Ala) in a two-step reaction: alanine is first activated by ATP to form Ala-AMP and then transferred to the acceptor end of tRNA(Ala). Also edits incorrectly charged Ser-tRNA(Ala) and Gly-tRNA(Ala) via its editing domain. This Acetivibrio thermocellus (strain ATCC 27405 / DSM 1237 / JCM 9322 / NBRC 103400 / NCIMB 10682 / NRRL B-4536 / VPI 7372) (Clostridium thermocellum) protein is Alanine--tRNA ligase.